The chain runs to 87 residues: Dynein light chain 1, cytoplasmic (87 aa).

This sequence belongs to the dynein light chain family. Homodimer. Cytoplasmic dynein consists of two catalytic heavy chains (HCs) and a number of non-catalytic subunits which present intermediate chains (ICs), light intermediate chains (LICs) and light chains (LCs). Component of the nuclear pore complex (NPC). NPC constitutes the exclusive means of nucleocytoplasmic transport. NPCs allow the passive diffusion of ions and small molecules and the active, nuclear transport receptor-mediated bidirectional transport of macromolecules such as proteins, RNAs, ribonucleoparticles (RNPs), and ribosomal subunits across the nuclear envelope. Due to its 8-fold rotational symmetry, all subunits are present with 8 copies or multiples thereof.

It is found in the cytoplasm. The protein localises to the cytoskeleton. It localises to the nucleus. The protein resides in the nuclear pore complex. Functionally, acts as one of several non-catalytic accessory components of the cytoplasmic dynein complex that are thought to be involved in linking dynein to cargos and to adapter proteins that regulate dynein function. Cytoplasmic dynein 1 acts as a motor for the intracellular retrograde motility of vesicles and organelles along microtubules. May play a role in changing or maintaining the spatial distribution of cytoskeletal structures. Also a component of the nuclear pore complex. The sequence is that of Dynein light chain 1, cytoplasmic (DYN2) from Kluyveromyces lactis (strain ATCC 8585 / CBS 2359 / DSM 70799 / NBRC 1267 / NRRL Y-1140 / WM37) (Yeast).